A 319-amino-acid chain; its full sequence is Large ribosomal subunit protein uL29m (319 aa).

Residues 1–55 (MWKRSFHSQGGPLRARTKFTKPKPKQPVLPKDKIRPPTQLTHHSNNLRITEPIPP) form a disordered region. Basic residues predominate over residues 15–24 (ARTKFTKPKP). Over residues 38-48 (TQLTHHSNNLR) the composition is skewed to polar residues.

This sequence belongs to the universal ribosomal protein uL29 family. As to quaternary structure, component of the mitochondrial large ribosomal subunit. Mature mitochondrial ribosomes consist of a small (37S) and a large (54S) subunit. The 37S subunit contains at least 33 different proteins and 1 molecule of RNA (15S). The 54S subunit contains at least 45 different proteins and 1 molecule of RNA (21S).

Its subcellular location is the mitochondrion. The sequence is that of Large ribosomal subunit protein uL29m (MRPL4) from Saccharomyces cerevisiae (strain YJM789) (Baker's yeast).